We begin with the raw amino-acid sequence, 263 residues long: Elongation factor Ts (263 aa).

The tract at residues 82 to 85 is involved in Mg(2+) ion dislocation from EF-Tu; that stretch reads TDFV. Low complexity predominate over residues 221–251; it reads APPAVVEAPVAETPEPAVAETPEAKPAATES. Residues 221–263 form a disordered region; the sequence is APPAVVEAPVAETPEPAVAETPEAKPAATESKPAKSKSAKKKK. The span at 254-263 shows a compositional bias: basic residues; sequence AKSKSAKKKK.

The protein belongs to the EF-Ts family.

The protein resides in the cytoplasm. Its function is as follows. Associates with the EF-Tu.GDP complex and induces the exchange of GDP to GTP. It remains bound to the aminoacyl-tRNA.EF-Tu.GTP complex up to the GTP hydrolysis stage on the ribosome. The sequence is that of Elongation factor Ts from Cyanothece sp. (strain PCC 7425 / ATCC 29141).